Here is a 525-residue protein sequence, read N- to C-terminus: Vanin-like protein 2 (525 aa).

The first 27 residues, 1–27, serve as a signal peptide directing secretion; the sequence is MAKNYWGFFLFCLALGLMLNLSQQASL. N-linked (GlcNAc...) asparagine glycans are attached at residues Asn-20 and Asn-61. One can recognise a CN hydrolase domain in the interval 33 to 303; the sequence is YTAGVVEFEP…RSIYVARVPK (271 aa). The active-site Proton acceptor is Glu-72. Residues Asn-99, Asn-116, and Asn-124 are each glycosylated (N-linked (GlcNAc...) asparagine). Residue Lys-167 is the Proton donor of the active site. Asn-176 carries an N-linked (GlcNAc...) asparagine glycan. Residue Cys-199 is the Nucleophile of the active site. N-linked (GlcNAc...) asparagine glycosylation is found at Asn-333, Asn-348, and Asn-375.

It belongs to the carbon-nitrogen hydrolase superfamily. BTD/VNN family. In terms of tissue distribution, expressed in third instar larvae.

It is found in the secreted. This Drosophila melanogaster (Fruit fly) protein is Vanin-like protein 2.